Reading from the N-terminus, the 132-residue chain is MSKLLLKTPCTTWTFDSLMACVFGIKVSDVKVYFDILKNGPSKINDIAERINRDRSTVQRAVQNLMNAGLVKRKQVNIKDGGYYYVYEAIPFEETKKIIKKTMEEWCNNMKKWVEELEFEDVVKEYLENIEE.

This is an uncharacterized protein from Methanocaldococcus jannaschii (strain ATCC 43067 / DSM 2661 / JAL-1 / JCM 10045 / NBRC 100440) (Methanococcus jannaschii).